Consider the following 506-residue polypeptide: 2-isopropylmalate synthase (506 aa).

The Pyruvate carboxyltransferase domain occupies 6–267 (IIVFDTTLRD…YTDIVTKEIY (262 aa)). Mn(2+)-binding residues include Asp15, His201, His203, and Asn237. Residues 391–506 (SIQTLSTSSC…LNSYLSMKNR (116 aa)) are regulatory domain.

It belongs to the alpha-IPM synthase/homocitrate synthase family. LeuA type 1 subfamily. As to quaternary structure, homodimer. Mn(2+) is required as a cofactor.

The protein localises to the cytoplasm. It carries out the reaction 3-methyl-2-oxobutanoate + acetyl-CoA + H2O = (2S)-2-isopropylmalate + CoA + H(+). Its pathway is amino-acid biosynthesis; L-leucine biosynthesis; L-leucine from 3-methyl-2-oxobutanoate: step 1/4. Its function is as follows. Catalyzes the condensation of the acetyl group of acetyl-CoA with 3-methyl-2-oxobutanoate (2-ketoisovalerate) to form 3-carboxy-3-hydroxy-4-methylpentanoate (2-isopropylmalate). This Campylobacter fetus subsp. fetus (strain 82-40) protein is 2-isopropylmalate synthase.